A 525-amino-acid chain; its full sequence is MNDLKKSPLLILDFGSQYTQLIARRVREMGVYCEIYPYHINHEQFKKLNPCGVILSGGPSTVTHDANPRAPQWLFDSGLPLLGICYGMQTMAVQLGGQVHSSALREFGYAELRLHGHSQLLNNIEDRILADGSALLDVWMSHGDKVTELPPGFKIICETRNAPIAGMADESRQMYGLQFHPEVTHTLQGLRILQRFVVDICKASTDWTPEHIIDEAINKIREQVGTEKVLLGLSGGVDSSVVAALLHRAIGEQLVCVFVDTGLLRLNEAEQVLSMFGRHMGIRIIAVNAEDKFLTALKGVTCPEEKRKIIGRTFIEVFDEEAQKLTEIKWLAQGTIYPDVIESAATSTNDAAVVIKSHHNVGGLPDTLNLKLLEPIRELFKDEVRQVGLELGLPHDMVYRHPFPGPGLGVRILAEVKKEYADILRKADAIFIEELHNAQLYHKISQAFAVFLPVKSVGVMGDGRRYDYVICLRAVETVDFMTAHWSQLPWDFLGKVSNRIINEVEGVSRVTYDISGKPPATIEWE.

Positions 8 to 206 constitute a Glutamine amidotransferase type-1 domain; that stretch reads PLLILDFGSQ…VVDICKASTD (199 aa). Residue Cys85 is the Nucleophile of the active site. Active-site residues include His180 and Glu182. The GMPS ATP-PPase domain occupies 207 to 400; that stretch reads WTPEHIIDEA…LGLPHDMVYR (194 aa). 234 to 240 contacts ATP; the sequence is SGGVDSS.

Homodimer.

It catalyses the reaction XMP + L-glutamine + ATP + H2O = GMP + L-glutamate + AMP + diphosphate + 2 H(+). It participates in purine metabolism; GMP biosynthesis; GMP from XMP (L-Gln route): step 1/1. Catalyzes the synthesis of GMP from XMP. This Legionella pneumophila subsp. pneumophila (strain Philadelphia 1 / ATCC 33152 / DSM 7513) protein is GMP synthase [glutamine-hydrolyzing].